The following is a 219-amino-acid chain: Alpha N-terminal protein methyltransferase 1 (219 aa).

S-adenosyl-L-methionine is bound by residues G64, R69, 111–112 (LQ), and Q127.

This sequence belongs to the methyltransferase superfamily. NTM1 family.

It is found in the cytoplasm. The enzyme catalyses N-terminal L-alanyl-L-prolyl-L-lysyl-[protein] + 3 S-adenosyl-L-methionine = N-terminal N,N,N-trimethyl-L-alanyl-L-prolyl-L-lysyl-[protein] + 3 S-adenosyl-L-homocysteine + 3 H(+). The catalysed reaction is N-terminal L-seryl-L-prolyl-L-lysyl-[protein] + 3 S-adenosyl-L-methionine = N-terminal N,N,N-trimethyl-L-seryl-L-prolyl-L-lysyl-[protein] + 3 S-adenosyl-L-homocysteine + 3 H(+). It carries out the reaction N-terminal L-prolyl-L-prolyl-L-lysyl-[protein] + 2 S-adenosyl-L-methionine = N-terminal N,N-dimethyl-L-prolyl-L-prolyl-L-lysyl-[protein] + 2 S-adenosyl-L-homocysteine + 2 H(+). In terms of biological role, alpha-N-methyltransferase that methylates the N-terminus of target proteins containing the N-terminal motif [Ala/Pro/Ser]-Pro-Lys when the initiator Met is cleaved. Specifically catalyzes mono-, di- or tri-methylation of exposed alpha-amino group of Ala or Ser residue in the [Ala/Ser]-Pro-Lys motif and mono- or di-methylation of Pro in the Pro-Pro-Lys motif. This Schizosaccharomyces pombe (strain 972 / ATCC 24843) (Fission yeast) protein is Alpha N-terminal protein methyltransferase 1 (tae1).